Here is a 282-residue protein sequence, read N- to C-terminus: Ribosomal RNA small subunit methyltransferase I (282 aa).

The protein belongs to the methyltransferase superfamily. RsmI family.

The protein localises to the cytoplasm. The catalysed reaction is cytidine(1402) in 16S rRNA + S-adenosyl-L-methionine = 2'-O-methylcytidine(1402) in 16S rRNA + S-adenosyl-L-homocysteine + H(+). Its function is as follows. Catalyzes the 2'-O-methylation of the ribose of cytidine 1402 (C1402) in 16S rRNA. This is Ribosomal RNA small subunit methyltransferase I from Buchnera aphidicola subsp. Acyrthosiphon pisum (strain APS) (Acyrthosiphon pisum symbiotic bacterium).